The sequence spans 441 residues: Ribosomal protein uS12 methylthiotransferase RimO (441 aa).

An MTTase N-terminal domain is found at 8–118; it reads PKIGFVSLGC…VLEHVHHYVP (111 aa). 6 residues coordinate [4Fe-4S] cluster: C17, C53, C82, C150, C154, and C157. One can recognise a Radical SAM core domain in the interval 136-373; sequence LTPRHYAYLK…MQLQQQISAE (238 aa). Residues 376–441 form the TRAM domain; that stretch reads QEKVGREILV…DEYDLWGSRV (66 aa).

This sequence belongs to the methylthiotransferase family. RimO subfamily. The cofactor is [4Fe-4S] cluster.

Its subcellular location is the cytoplasm. It catalyses the reaction L-aspartate(89)-[ribosomal protein uS12]-hydrogen + (sulfur carrier)-SH + AH2 + 2 S-adenosyl-L-methionine = 3-methylsulfanyl-L-aspartate(89)-[ribosomal protein uS12]-hydrogen + (sulfur carrier)-H + 5'-deoxyadenosine + L-methionine + A + S-adenosyl-L-homocysteine + 2 H(+). Catalyzes the methylthiolation of an aspartic acid residue of ribosomal protein uS12. This Shigella sonnei (strain Ss046) protein is Ribosomal protein uS12 methylthiotransferase RimO.